A 191-amino-acid chain; its full sequence is Chorion class B protein Ld10 (191 aa).

The N-terminal stretch at 1–21 (MSAKIILVFCAQALFVQSALS) is a signal peptide.

It belongs to the chorion protein family.

Its function is as follows. This protein is one of many from the eggshell of the gypsy moth. The sequence is that of Chorion class B protein Ld10 from Lymantria dispar (Gypsy moth).